A 456-amino-acid polypeptide reads, in one-letter code: Cysteine--tRNA ligase (456 aa).

Cysteine 28 lines the Zn(2+) pocket. Residues 30 to 40 (ITVYDHCHLGH) carry the 'HIGH' region motif. 3 residues coordinate Zn(2+): cysteine 209, histidine 234, and glutamate 238. The short motif at 266-270 (KMAKS) is the 'KMSKS' region element. Lysine 269 provides a ligand contact to ATP.

This sequence belongs to the class-I aminoacyl-tRNA synthetase family. Monomer. The cofactor is Zn(2+).

The protein localises to the cytoplasm. The catalysed reaction is tRNA(Cys) + L-cysteine + ATP = L-cysteinyl-tRNA(Cys) + AMP + diphosphate. This is Cysteine--tRNA ligase from Legionella pneumophila (strain Corby).